The primary structure comprises 507 residues: ATP synthase subunit alpha, mitochondrial (507 aa).

171–178 lines the ATP pocket; the sequence is GDRQTGKT.

The protein belongs to the ATPase alpha/beta chains family. As to quaternary structure, F-type ATPases have 2 components, CF(1) - the catalytic core - and CF(0) - the membrane proton channel. CF(1) has five subunits: alpha(3), beta(3), gamma(1), delta(1), epsilon(1). CF(0) has three main subunits: a, b and c.

Its subcellular location is the mitochondrion. It localises to the mitochondrion inner membrane. Its function is as follows. Mitochondrial membrane ATP synthase (F(1)F(0) ATP synthase or Complex V) produces ATP from ADP in the presence of a proton gradient across the membrane which is generated by electron transport complexes of the respiratory chain. F-type ATPases consist of two structural domains, F(1) - containing the extramembraneous catalytic core, and F(0) - containing the membrane proton channel, linked together by a central stalk and a peripheral stalk. During catalysis, ATP synthesis in the catalytic domain of F(1) is coupled via a rotary mechanism of the central stalk subunits to proton translocation. Subunits alpha and beta form the catalytic core in F(1). Rotation of the central stalk against the surrounding alpha(3)beta(3) subunits leads to hydrolysis of ATP in three separate catalytic sites on the beta subunits. Subunit alpha does not bear the catalytic high-affinity ATP-binding sites. The protein is ATP synthase subunit alpha, mitochondrial (ATPA) of Arabidopsis thaliana (Mouse-ear cress).